We begin with the raw amino-acid sequence, 611 residues long: Aspartate--tRNA(Asp/Asn) ligase (611 aa).

An L-aspartate-binding site is contributed by glutamate 174. The segment at 198 to 201 (QLFK) is aspartate. Arginine 220 provides a ligand contact to L-aspartate. ATP-binding positions include 220–222 (RDE) and glutamine 229. Position 467 (histidine 467) interacts with L-aspartate. Glutamate 501 contacts ATP. L-aspartate is bound at residue arginine 508. 553–556 (GLDR) contacts ATP.

Belongs to the class-II aminoacyl-tRNA synthetase family. Type 1 subfamily. As to quaternary structure, homodimer.

Its subcellular location is the cytoplasm. The enzyme catalyses tRNA(Asx) + L-aspartate + ATP = L-aspartyl-tRNA(Asx) + AMP + diphosphate. In terms of biological role, aspartyl-tRNA synthetase with relaxed tRNA specificity since it is able to aspartylate not only its cognate tRNA(Asp) but also tRNA(Asn). Reaction proceeds in two steps: L-aspartate is first activated by ATP to form Asp-AMP and then transferred to the acceptor end of tRNA(Asp/Asn). This is Aspartate--tRNA(Asp/Asn) ligase from Albidiferax ferrireducens (strain ATCC BAA-621 / DSM 15236 / T118) (Rhodoferax ferrireducens).